A 201-amino-acid chain; its full sequence is UPF0056 membrane protein PH0760 (201 aa).

The next 6 helical transmembrane spans lie at 8–28, 49–69, 73–93, 111–131, 140–160, and 181–201; these read FMIL…VPVF, ITVF…FKFF, IDAF…EMLS, VAVI…TTVM, GIVI…LYSG, and LILT…AFGI.

The protein belongs to the UPF0056 (MarC) family.

It is found in the cell membrane. The sequence is that of UPF0056 membrane protein PH0760 from Pyrococcus horikoshii (strain ATCC 700860 / DSM 12428 / JCM 9974 / NBRC 100139 / OT-3).